The following is a 504-amino-acid chain: Maturase K (504 aa).

This sequence belongs to the intron maturase 2 family. MatK subfamily.

The protein resides in the plastid. It is found in the chloroplast. Usually encoded in the trnK tRNA gene intron. Probably assists in splicing its own and other chloroplast group II introns. The polypeptide is Maturase K (Vigna unguiculata (Cowpea)).